We begin with the raw amino-acid sequence, 405 residues long: Subtilisin-like protease 6 (405 aa).

A signal peptide spans F1 to G18. Positions A19–L125 are excised as a propeptide. One can recognise an Inhibitor I9 domain in the interval K34–T118. N-linked (GlcNAc...) asparagine glycans are attached at residues N121 and N124. The 273-residue stretch at S133 to Y405 folds into the Peptidase S8 domain. Residues D165 and H196 each act as charge relay system in the active site. N-linked (GlcNAc...) asparagine glycans are attached at residues N250 and N262. S356 acts as the Charge relay system in catalysis.

Belongs to the peptidase S8 family.

It localises to the secreted. Its function is as follows. Secreted subtilisin-like serine protease with keratinolytic activity that contributes to pathogenicity. This chain is Subtilisin-like protease 6 (SUB6), found in Trichophyton schoenleinii.